The sequence spans 539 residues: Propionyl-CoA carboxylase beta chain, mitochondrial (539 aa).

A mitochondrion-targeting transit peptide spans 1-28 (MAAALRVAAVGARLSVLASGLRAAVRSL). The 259-residue stretch at 32–290 (ATSVNERIEN…SSQDPAPVRE (259 aa)) folds into the CoA carboxyltransferase N-terminal domain. The segment at 32 to 533 (ATSVNERIEN…SKKVQRPWRK (502 aa)) is carboxyltransferase. Phosphoserine is present on Ser71. Lys99 is modified (N6-acetyllysine; alternate). An N6-succinyllysine; alternate modification is found at Lys99. Lys248 is subject to N6-succinyllysine. Residues 294-533 (PSDRLVPELD…SKKVQRPWRK (240 aa)) form the CoA carboxyltransferase C-terminal domain. Residues 325-358 (DEREFFEIMPNYAKNIIVGFARMNGRTVGIVGNQ) are acyl-CoA binding. Residues Lys474 and Lys489 each carry the N6-acetyllysine; alternate modification. Residues Lys474 and Lys489 each carry the N6-succinyllysine; alternate modification.

It belongs to the AccD/PCCB family. The holoenzyme is a dodecamer composed of 6 PCCA/alpha subunits and 6 PCCB/beta subunits.

The protein resides in the mitochondrion matrix. It carries out the reaction propanoyl-CoA + hydrogencarbonate + ATP = (S)-methylmalonyl-CoA + ADP + phosphate + H(+). It catalyses the reaction butanoyl-CoA + hydrogencarbonate + ATP = (2S)-ethylmalonyl-CoA + ADP + phosphate + H(+). It participates in metabolic intermediate metabolism; propanoyl-CoA degradation; succinyl-CoA from propanoyl-CoA: step 1/3. Functionally, this is one of the 2 subunits of the biotin-dependent propionyl-CoA carboxylase (PCC), a mitochondrial enzyme involved in the catabolism of odd chain fatty acids, branched-chain amino acids isoleucine, threonine, methionine, and valine and other metabolites. Propionyl-CoA carboxylase catalyzes the carboxylation of propionyl-CoA/propanoyl-CoA to D-methylmalonyl-CoA/(S)-methylmalonyl-CoA. Within the holoenzyme, the alpha subunit catalyzes the ATP-dependent carboxylation of the biotin carried by the biotin carboxyl carrier (BCC) domain, while the beta subunit then transfers the carboxyl group from carboxylated biotin to propionyl-CoA. Propionyl-CoA carboxylase also significantly acts on butyryl-CoA/butanoyl-CoA, which is converted to ethylmalonyl-CoA/(2S)-ethylmalonyl-CoA at a much lower rate. Other alternative minor substrates include (2E)-butenoyl-CoA/crotonoyl-CoA. The sequence is that of Propionyl-CoA carboxylase beta chain, mitochondrial from Homo sapiens (Human).